Consider the following 898-residue polypeptide: Chaperone protein ClpB 1 (898 aa).

Residues P6 to S148 enclose the Clp R domain. 2 repeat regions span residues F9–Q74 and L85–S148. Residues E161–Q344 form an NBD1 region. Residue G208–T215 participates in ATP binding. The linker stretch occupies residues P345 to G560. A coiled-coil region spans residues I395 to G536. The segment at E570–T781 is NBD2. G620–T627 lines the ATP pocket. Residues L782–S898 are C-terminal.

The protein belongs to the ClpA/ClpB family. In terms of assembly, homohexamer. The oligomerization is ATP-dependent.

The protein localises to the cytoplasm. In terms of biological role, part of a stress-induced multi-chaperone system, it is involved in the recovery of the cell from heat-induced damage, in cooperation with DnaK, DnaJ and GrpE. Acts before DnaK, in the processing of protein aggregates. Protein binding stimulates the ATPase activity; ATP hydrolysis unfolds the denatured protein aggregates, which probably helps expose new hydrophobic binding sites on the surface of ClpB-bound aggregates, contributing to the solubilization and refolding of denatured protein aggregates by DnaK. This chain is Chaperone protein ClpB 1 (clpB1), found in Synechocystis sp. (strain ATCC 27184 / PCC 6803 / Kazusa).